Consider the following 357-residue polypeptide: DNA integrity scanning protein DisA (357 aa).

Residues 8–146 (VKSMINILQL…GNLRYTLKDI (139 aa)) form the DAC domain. ATP-binding positions include Gly75, Leu93, and 106–110 (MRHRT).

This sequence belongs to the DisA family. As to quaternary structure, homooctamer. Requires Mg(2+) as cofactor.

The enzyme catalyses 2 ATP = 3',3'-c-di-AMP + 2 diphosphate. In terms of biological role, participates in a DNA-damage check-point that is active prior to asymmetric division when DNA is damaged. DisA forms globular foci that rapidly scan along the chromosomes during sporulation, searching for lesions. When a lesion is present, DisA pauses at the lesion site. This triggers a cellular response that culminates in a temporary block in sporulation initiation. Its function is as follows. Also has diadenylate cyclase activity, catalyzing the condensation of 2 ATP molecules into cyclic di-AMP (c-di-AMP). c-di-AMP acts as a signaling molecule that couples DNA integrity with progression of sporulation. The rise in c-di-AMP level generated by DisA while scanning the chromosome, operates as a positive signal that advances sporulation; upon encountering a lesion, the DisA focus arrests at the damaged site and halts c-di-AMP synthesis. This Bacillus mycoides (strain KBAB4) (Bacillus weihenstephanensis) protein is DNA integrity scanning protein DisA.